Consider the following 328-residue polypeptide: Putative HTH-type transcriptional regulatory protein MA_3524 (328 aa).

An HTH cro/C1-type domain is found at Leu-132–Leu-190. Residues Leu-143–Glu-162 constitute a DNA-binding region (H-T-H motif).

The polypeptide is Putative HTH-type transcriptional regulatory protein MA_3524 (Methanosarcina acetivorans (strain ATCC 35395 / DSM 2834 / JCM 12185 / C2A)).